The primary structure comprises 498 residues: Tyrosine 3-monooxygenase (498 aa).

Residues 1–10 (MPTPSAPSPQ) show a composition bias toward pro residues. The tract at residues 1–31 (MPTPSAPSPQPKGFRRAVSEQDAKQAEAVTS) is disordered. At Ser-19 the chain carries Phosphoserine; by CaMK2. At Ser-31 the chain carries Phosphoserine. A Phosphoserine; by CaMK2 and PKA modification is found at Ser-40. The Fe cation site is built by His-331, His-336, and Glu-376. Ser-472 is modified (phosphoserine).

This sequence belongs to the biopterin-dependent aromatic amino acid hydroxylase family. In terms of assembly, homotetramer. Interacts (when phosphorylated at Ser-19) with YWHAG; one YWHAG dimer binds to one TH tetramer and this interaction may influence the phosphorylation and dephosphorylation of other sites. Interacts with NT5DC2; the interaction results in reduced phosphorylation and decreased catalytic activity of TH. Fe(2+) is required as a cofactor. Post-translationally, phosphorylated on Ser-19, Ser-31 and Ser-40 by several protein kinases with different site specificities. Phosphorylation at Ser-31 and Ser-40 leads to an increase of TH activity. Phosphorylation at Ser-40 activates the enzyme and also counteracts the feedback inhibition of TH by catecholamines. Phosphorylation of Ser-19 and Ser-31 triggers the proteasomal degradation of TH through the ubiquitin-proteasome pathway. Phosphorylation at Ser-31 facilitates transport of TH from the soma to the nerve terminals via the microtubule network. Phosphorylation at Ser-19 induces the high-affinity binding to the 14-3-3 protein YWHAG; this interaction may influence the phosphorylation and dephosphorylation of other sites. Ser-19 increases the phosphorylation at Ser-40 in a hierarchical manner, leading to increased activity.

Its subcellular location is the cytoplasm. The protein localises to the perinuclear region. The protein resides in the nucleus. It localises to the cell projection. It is found in the axon. Its subcellular location is the cytoplasmic vesicle. The protein localises to the secretory vesicle. The protein resides in the synaptic vesicle. The catalysed reaction is (6R)-L-erythro-5,6,7,8-tetrahydrobiopterin + L-tyrosine + O2 = (4aS,6R)-4a-hydroxy-L-erythro-5,6,7,8-tetrahydrobiopterin + L-dopa. It participates in catecholamine biosynthesis; dopamine biosynthesis; dopamine from L-tyrosine: step 1/2. With respect to regulation, inhibited in feedback fashion by the catecholamine neurotransmitters, especially by dopamine in competition with tetrahydrobiopterin. Phosphorylation of several Ser/Thr residues in the N-terminus regulates the catalytic activity. Ser-31 and Ser-40 are readily phosphorylated to activate the catalytic activity. A cysteine modification induced by N-ethylmaleimide (NEM), inhibits tyrosine 3-monooxygenase activity through the modification of the Cys-177. Functionally, catalyzes the conversion of L-tyrosine to L-dihydroxyphenylalanine (L-Dopa), the rate-limiting step in the biosynthesis of catecholamines, dopamine, noradrenaline, and adrenaline. Uses tetrahydrobiopterin and molecular oxygen to convert tyrosine to L-Dopa. In addition to tyrosine, is able to catalyze the hydroxylation of phenylalanine and tryptophan but with lower specificity. Positively regulates the regression of retinal hyaloid vessels during postnatal development. In Rattus norvegicus (Rat), this protein is Tyrosine 3-monooxygenase (Th).